The sequence spans 83 residues: MSGTKKVGSAGRFGPRYGLKIRRRVAAVEAKMRQKHVCPVCGRRAVRRISTGIWQCKKCGAIFAGGAYLPVTPAGKVAKRVVE.

Zn(2+) is bound by residues cysteine 38, cysteine 41, cysteine 56, and cysteine 59. The segment at cysteine 38–cysteine 59 adopts a C4-type zinc-finger fold.

Belongs to the eukaryotic ribosomal protein eL43 family. Putative zinc-binding subfamily. Part of the 50S ribosomal subunit. Zn(2+) is required as a cofactor.

In terms of biological role, binds to the 23S rRNA. The protein is Large ribosomal subunit protein eL43 of Pyrococcus abyssi (strain GE5 / Orsay).